Consider the following 335-residue polypeptide: Phosphate acyltransferase (335 aa).

The protein belongs to the PlsX family. Homodimer. Probably interacts with PlsY.

The protein resides in the cytoplasm. It catalyses the reaction a fatty acyl-[ACP] + phosphate = an acyl phosphate + holo-[ACP]. It participates in lipid metabolism; phospholipid metabolism. Functionally, catalyzes the reversible formation of acyl-phosphate (acyl-PO(4)) from acyl-[acyl-carrier-protein] (acyl-ACP). This enzyme utilizes acyl-ACP as fatty acyl donor, but not acyl-CoA. In Alkaliphilus oremlandii (strain OhILAs) (Clostridium oremlandii (strain OhILAs)), this protein is Phosphate acyltransferase.